The following is a 447-amino-acid chain: Cytochrome P450 BJ-4 (447 aa).

Cys-392 is a heme binding site.

This sequence belongs to the cytochrome P450 family. Heme serves as cofactor.

Functionally, cytochromes P450 are a group of heme-thiolate monooxygenases. They oxidize a variety of structurally unrelated compounds, including steroids, fatty acids, and xenobiotics. This Bradyrhizobium diazoefficiens (strain JCM 10833 / BCRC 13528 / IAM 13628 / NBRC 14792 / USDA 110) protein is Cytochrome P450 BJ-4 (cyp117).